Consider the following 100-residue polypeptide: MALSQKALLVLVLSMLLTASDSWARRINCKVFVYAPICRGVAAKRGGDSLSVGGSAELDDTLTDPFLKSEEPKEWRELTRLSRVLQTFLSHPTGEMEQHD.

The N-terminal stretch at M1–A24 is a signal peptide. A disulfide bridge connects residues C29 and C38. Positions K44 to D100 are excised as a propeptide.

The protein belongs to the elevenin family. As to quaternary structure, monomer. Expressed by the venom duct.

It is found in the secreted. In terms of biological role, may mimic the function of prey elevenin neuropeptide. In vivo, intracranial injection in mice induces hyperactivity. In Conus ammiralis (Admiral cone), this protein is Elevenin.